Consider the following 189-residue polypeptide: Probable hydrogen peroxide-inducible genes activator (189 aa).

In terms of domain architecture, HTH lysR-type spans 8-65; the sequence is PTLAGLRAFAAVAEKQHFGSAASALGVNQSTLSQALAGLESGLGVRLIERSTRRVFLT. The segment at residues 25–44 is a DNA-binding region (H-T-H motif); sequence FGSAASALGVNQSTLSQALA.

It belongs to the LysR transcriptional regulatory family.

In terms of biological role, required for the induction the katG gene for catalase. Involved in the response to hydrogen peroxide. The sequence is that of Probable hydrogen peroxide-inducible genes activator (oxyR) from Mycobacterium xenopi.